A 119-amino-acid chain; its full sequence is Aspartate 1-decarboxylase (119 aa).

Catalysis depends on Ser25, which acts as the Schiff-base intermediate with substrate; via pyruvic acid. Residue Ser25 is modified to Pyruvic acid (Ser). Position 57 (Thr57) interacts with substrate. The active-site Proton donor is Tyr58. Gly73–Ala75 provides a ligand contact to substrate.

Belongs to the PanD family. Heterooctamer of four alpha and four beta subunits. Requires pyruvate as cofactor. In terms of processing, is synthesized initially as an inactive proenzyme, which is activated by self-cleavage at a specific serine bond to produce a beta-subunit with a hydroxyl group at its C-terminus and an alpha-subunit with a pyruvoyl group at its N-terminus.

The protein resides in the cytoplasm. The enzyme catalyses L-aspartate + H(+) = beta-alanine + CO2. It participates in cofactor biosynthesis; (R)-pantothenate biosynthesis; beta-alanine from L-aspartate: step 1/1. Catalyzes the pyruvoyl-dependent decarboxylation of aspartate to produce beta-alanine. This Desulfotalea psychrophila (strain LSv54 / DSM 12343) protein is Aspartate 1-decarboxylase.